The sequence spans 105 residues: Nucleoid-associated protein Sca_0120 (105 aa).

The segment at M1–S36 is disordered. A compositionally biased stretch (low complexity) spans M7 to K16. Over residues K20–E34 the composition is skewed to basic and acidic residues.

It belongs to the YbaB/EbfC family. As to quaternary structure, homodimer.

The protein resides in the cytoplasm. The protein localises to the nucleoid. Functionally, binds to DNA and alters its conformation. May be involved in regulation of gene expression, nucleoid organization and DNA protection. This Staphylococcus carnosus (strain TM300) protein is Nucleoid-associated protein Sca_0120.